The sequence spans 933 residues: Neuronal PAS domain-containing protein 4A (933 aa).

The basic motif; degenerate stretch occupies residues 1-13 (MYRSTKGASKARR). Residues 1–53 (MYRSTKGASKARRDQINAEIRNLKDLLPISDADKSRLSYLHIMSLACMYTRKS) form the bHLH domain. The interval 14–53 (DQINAEIRNLKDLLPISDADKSRLSYLHIMSLACMYTRKS) is helix-loop-helix motif. 2 consecutive PAS domains span residues 74-148 (SFYE…PDTD) and 220-290 (TSAS…LREG). Residues 295 to 334 (AEMVVRVETADHSWVWLYMVLQLETGETPIVSNNYIISET) enclose the PAC domain. Residues 361 to 398 (QESVSLQSPETLSSPDQVFTPGSSGLSGQSFDFSTAAC) are compositionally biased toward polar residues. Disordered regions lie at residues 361-451 (QESV…ASSP), 514-573 (GSNF…LSSL), and 750-776 (DLSS…PSTP). Low complexity-rich tracts occupy residues 399–411 (STGS…GSSS), 440–451 (EPMASPSSASSP), 538–560 (GQTA…SNPQ), and 751–769 (LSSS…HSSP).

As to quaternary structure, efficient DNA binding requires dimerization with another bHLH protein. As to expression, brain-specific.

It localises to the nucleus. Functionally, transcription factor expressed in neurons of the brain that regulates the excitatory-inhibitory balance within neural circuits and is required for contextual memory in the hippocampus. Plays a key role in the structural and functional plasticity of neurons. Acts as an early-response transcription factor in both excitatory and inhibitory neurons, where it induces distinct but overlapping sets of late-response genes in these two types of neurons, allowing the synapses that form on inhibitory and excitatory neurons to be modified by neuronal activity in a manner specific to their function within a circuit, thereby facilitating appropriate circuit responses to sensory experience. In Danio rerio (Zebrafish), this protein is Neuronal PAS domain-containing protein 4A (npas4a).